Here is a 114-residue protein sequence, read N- to C-terminus: MAEITSAKAMARTVRVSPRKTRLVLDLIRGKKVADAIAILKFTPNKAARVIEKTLNSAIANAENNFGLEKANLVVSETFANEGPTMKRFRPRAKGSASPINKRTTHVTVVVAEK.

It belongs to the universal ribosomal protein uL22 family. In terms of assembly, part of the 50S ribosomal subunit.

In terms of biological role, this protein binds specifically to 23S rRNA; its binding is stimulated by other ribosomal proteins, e.g. L4, L17, and L20. It is important during the early stages of 50S assembly. It makes multiple contacts with different domains of the 23S rRNA in the assembled 50S subunit and ribosome. The globular domain of the protein is located near the polypeptide exit tunnel on the outside of the subunit, while an extended beta-hairpin is found that lines the wall of the exit tunnel in the center of the 70S ribosome. This chain is Large ribosomal subunit protein uL22, found in Streptococcus uberis (strain ATCC BAA-854 / 0140J).